We begin with the raw amino-acid sequence, 335 residues long: Lipoyl synthase (335 aa).

Residues Cys-55, Cys-60, Cys-66, Cys-81, Cys-85, Cys-88, and Ser-292 each coordinate [4Fe-4S] cluster. One can recognise a Radical SAM core domain in the interval 67 to 281; sequence WEDREATFLI…SKAAEEIGFL (215 aa).

This sequence belongs to the radical SAM superfamily. Lipoyl synthase family. Requires [4Fe-4S] cluster as cofactor.

It is found in the cytoplasm. The enzyme catalyses [[Fe-S] cluster scaffold protein carrying a second [4Fe-4S](2+) cluster] + N(6)-octanoyl-L-lysyl-[protein] + 2 oxidized [2Fe-2S]-[ferredoxin] + 2 S-adenosyl-L-methionine + 4 H(+) = [[Fe-S] cluster scaffold protein] + N(6)-[(R)-dihydrolipoyl]-L-lysyl-[protein] + 4 Fe(3+) + 2 hydrogen sulfide + 2 5'-deoxyadenosine + 2 L-methionine + 2 reduced [2Fe-2S]-[ferredoxin]. The protein operates within protein modification; protein lipoylation via endogenous pathway; protein N(6)-(lipoyl)lysine from octanoyl-[acyl-carrier-protein]: step 2/2. Its function is as follows. Catalyzes the radical-mediated insertion of two sulfur atoms into the C-6 and C-8 positions of the octanoyl moiety bound to the lipoyl domains of lipoate-dependent enzymes, thereby converting the octanoylated domains into lipoylated derivatives. In Kocuria rhizophila (strain ATCC 9341 / DSM 348 / NBRC 103217 / DC2201), this protein is Lipoyl synthase.